A 116-amino-acid chain; its full sequence is UPF0342 protein RBAM_010030 (116 aa).

This sequence belongs to the UPF0342 family.

This Bacillus velezensis (strain DSM 23117 / BGSC 10A6 / LMG 26770 / FZB42) (Bacillus amyloliquefaciens subsp. plantarum) protein is UPF0342 protein RBAM_010030.